The primary structure comprises 133 residues: MGLENLKPAKGSVKKIKRVGRGQGSGMGKTATRGGKGQTARTGYKAKRGFEGGQQPLQRRLPKIGFRTKDSHIYSINVEKNEAIKNLEEITFSSLRALHHFPLYIEGVKLIGKDAKNLASKIKDERIKTSGQK.

The disordered stretch occupies residues M1–I64.

This sequence belongs to the universal ribosomal protein uL15 family. In terms of assembly, part of the 50S ribosomal subunit.

Functionally, binds to the 23S rRNA. The sequence is that of Large ribosomal subunit protein uL15 from Helicobacter pylori (strain G27).